Consider the following 389-residue polypeptide: Succinate--CoA ligase [ADP-forming] subunit beta (389 aa).

Residues Lys46, 53–55 (GRG), Glu99, Cys102, and Glu107 contribute to the ATP site. Mg(2+) is bound by residues Asn199 and Asp213. Residues Asn264 and 321 to 323 (GIV) contribute to the substrate site.

The protein belongs to the succinate/malate CoA ligase beta subunit family. In terms of assembly, heterotetramer of two alpha and two beta subunits. Mg(2+) serves as cofactor.

It carries out the reaction succinate + ATP + CoA = succinyl-CoA + ADP + phosphate. The enzyme catalyses GTP + succinate + CoA = succinyl-CoA + GDP + phosphate. It participates in carbohydrate metabolism; tricarboxylic acid cycle; succinate from succinyl-CoA (ligase route): step 1/1. In terms of biological role, succinyl-CoA synthetase functions in the citric acid cycle (TCA), coupling the hydrolysis of succinyl-CoA to the synthesis of either ATP or GTP and thus represents the only step of substrate-level phosphorylation in the TCA. The beta subunit provides nucleotide specificity of the enzyme and binds the substrate succinate, while the binding sites for coenzyme A and phosphate are found in the alpha subunit. This is Succinate--CoA ligase [ADP-forming] subunit beta from Haemophilus influenzae (strain PittEE).